We begin with the raw amino-acid sequence, 338 residues long: Mugineic-acid 3-dioxygenase (338 aa).

The 104-residue stretch at 180–283 folds into the Fe2OG dioxygenase domain; sequence DISGGRVVVD…RLSVASFIVP (104 aa). Histidine 208, aspartate 210, and histidine 264 together coordinate Fe cation. Arginine 274 provides a ligand contact to 2-oxoglutarate.

This sequence belongs to the iron/ascorbate-dependent oxidoreductase family. Fe(2+) is required as a cofactor. It depends on L-ascorbate as a cofactor. As to expression, expressed in roots, but not in leaves.

It carries out the reaction mugineate + 2-oxoglutarate + O2 = 3-epihydroxymugineate + succinate + CO2 + H(+). The enzyme catalyses 2'-deoxymugineate + 2-oxoglutarate + O2 = 3-epihydroxy-2'-deoxymugineate + succinate + CO2 + H(+). Involved in the biosynthesis of mugineic acid family of phytosiderophores. Hydroxylates the C-3 positions of mugineic acid (MA) and 2'-deoxymugineic acid (DMA). May be involved in boron tolerance. The sequence is that of Mugineic-acid 3-dioxygenase (IDS2) from Hordeum vulgare (Barley).